Here is a 612-residue protein sequence, read N- to C-terminus: Phosphoenolpyruvate carboxykinase [GTP] (612 aa).

Residues Arg-82 and 221–223 (YGG) each bind substrate. Lys-230 and His-250 together coordinate Mn(2+). A substrate-binding site is contributed by Ser-272. Position 273–278 (273–278 (ACGKTN)) interacts with GTP. Cys-274 is a catalytic residue. Residue Asp-297 coordinates Mn(2+). Residue 388 to 390 (NSR) participates in substrate binding. GTP contacts are provided by residues Arg-390, Arg-421, and 516–519 (FGEN).

It belongs to the phosphoenolpyruvate carboxykinase [GTP] family. As to quaternary structure, monomer. Mn(2+) is required as a cofactor.

The protein localises to the cytoplasm. It catalyses the reaction oxaloacetate + GTP = phosphoenolpyruvate + GDP + CO2. Its pathway is carbohydrate biosynthesis; gluconeogenesis. Catalyzes the conversion of oxaloacetate (OAA) to phosphoenolpyruvate (PEP), the rate-limiting step in the metabolic pathway that produces glucose from lactate and other precursors derived from the citric acid cycle. The chain is Phosphoenolpyruvate carboxykinase [GTP] from Corynebacterium efficiens (strain DSM 44549 / YS-314 / AJ 12310 / JCM 11189 / NBRC 100395).